We begin with the raw amino-acid sequence, 843 residues long: Protein P (843 aa).

Residues 1 to 177 (MPLSYPHFRK…FCGSPYSWEQ (177 aa)) are terminal protein domain (TP). The segment at 178-346 (ELQHGSTSLN…YCLSHIINLL (169 aa)) is spacer. 2 disordered regions span residues 228 to 259 (KQGQ…GVEP) and 283 to 314 (EKAN…SVGS). Basic residues predominate over residues 239–249 (RSGRLRSRVHT). Residues 347 to 690 (EDWGPCYEHG…YMNLYPVARQ (344 aa)) form a polymerase/reverse transcriptase domain (RT) region. The Reverse transcriptase domain maps to 357–600 (QHYIRTPRTP…YSLHFMGYVI (244 aa)). Mg(2+)-binding residues include Asp429, Asp551, and Asp552.

This sequence belongs to the hepadnaviridae P protein family.

The enzyme catalyses DNA(n) + a 2'-deoxyribonucleoside 5'-triphosphate = DNA(n+1) + diphosphate. It carries out the reaction Endonucleolytic cleavage to 5'-phosphomonoester.. Its activity is regulated as follows. Activated by host HSP70 and HSP40 in vitro to be able to bind the epsilon loop of the pgRNA. Because deletion of the RNase H region renders the protein partly chaperone-independent, the chaperones may be needed indirectly to relieve occlusion of the RNA-binding site by this domain. Inhibited by several reverse-transcriptase inhibitors: Lamivudine, Adefovir and Entecavir. Functionally, multifunctional enzyme that converts the viral RNA genome into dsDNA in viral cytoplasmic capsids. This enzyme displays a DNA polymerase activity that can copy either DNA or RNA templates, and a ribonuclease H (RNase H) activity that cleaves the RNA strand of RNA-DNA heteroduplexes in a partially processive 3'- to 5'-endonucleasic mode. Neo-synthesized pregenomic RNA (pgRNA) are encapsidated together with the P protein, and reverse-transcribed inside the nucleocapsid. Initiation of reverse-transcription occurs first by binding the epsilon loop on the pgRNA genome, and is initiated by protein priming, thereby the 5'-end of (-)DNA is covalently linked to P protein. Partial (+)DNA is synthesized from the (-)DNA template and generates the relaxed circular DNA (RC-DNA) genome. After budding and infection, the RC-DNA migrates in the nucleus, and is converted into a plasmid-like covalently closed circular DNA (cccDNA). The activity of P protein does not seem to be necessary for cccDNA generation, and is presumably released from (+)DNA by host nuclear DNA repair machinery. This is Protein P from Homo sapiens (Human).